The following is a 506-amino-acid chain: ATP synthase subunit alpha (506 aa).

Basic and acidic residues predominate over residues 119-129 (GPIEYEGKRPI). The interval 119-138 (GPIEYEGKRPIESPAPPIVR) is disordered. ATP is bound at residue 169-176 (GDRQTGKT).

This sequence belongs to the ATPase alpha/beta chains family. F-type ATPases have 2 components, CF(1) - the catalytic core - and CF(0) - the membrane proton channel. CF(1) has five subunits: alpha(3), beta(3), gamma(1), delta(1), epsilon(1). CF(0) has three main subunits: a(1), b(2) and c(9-12). The alpha and beta chains form an alternating ring which encloses part of the gamma chain. CF(1) is attached to CF(0) by a central stalk formed by the gamma and epsilon chains, while a peripheral stalk is formed by the delta and b chains.

The protein resides in the cell membrane. The catalysed reaction is ATP + H2O + 4 H(+)(in) = ADP + phosphate + 5 H(+)(out). Produces ATP from ADP in the presence of a proton gradient across the membrane. The alpha chain is a regulatory subunit. The polypeptide is ATP synthase subunit alpha (Caldanaerobacter subterraneus subsp. tengcongensis (strain DSM 15242 / JCM 11007 / NBRC 100824 / MB4) (Thermoanaerobacter tengcongensis)).